The primary structure comprises 367 residues: UDP-N-acetylglucosamine--N-acetylmuramyl-(pentapeptide) pyrophosphoryl-undecaprenol N-acetylglucosamine transferase (367 aa).

UDP-N-acetyl-alpha-D-glucosamine-binding positions include 15-17, Asn127, Arg163, Ser191, Ile249, and Gln294; that span reads TGG.

This sequence belongs to the glycosyltransferase 28 family. MurG subfamily.

Its subcellular location is the cell inner membrane. It catalyses the reaction di-trans,octa-cis-undecaprenyl diphospho-N-acetyl-alpha-D-muramoyl-L-alanyl-D-glutamyl-meso-2,6-diaminopimeloyl-D-alanyl-D-alanine + UDP-N-acetyl-alpha-D-glucosamine = di-trans,octa-cis-undecaprenyl diphospho-[N-acetyl-alpha-D-glucosaminyl-(1-&gt;4)]-N-acetyl-alpha-D-muramoyl-L-alanyl-D-glutamyl-meso-2,6-diaminopimeloyl-D-alanyl-D-alanine + UDP + H(+). It participates in cell wall biogenesis; peptidoglycan biosynthesis. Its function is as follows. Cell wall formation. Catalyzes the transfer of a GlcNAc subunit on undecaprenyl-pyrophosphoryl-MurNAc-pentapeptide (lipid intermediate I) to form undecaprenyl-pyrophosphoryl-MurNAc-(pentapeptide)GlcNAc (lipid intermediate II). In Burkholderia pseudomallei (strain 1710b), this protein is UDP-N-acetylglucosamine--N-acetylmuramyl-(pentapeptide) pyrophosphoryl-undecaprenol N-acetylglucosamine transferase.